The sequence spans 158 residues: MATIEGTFVNSSSLRVAIVIARFNDLITNKLLSGCMDCLSRHGIDVSESSNQLDIAWVPGSFELPIISQKLARNGNYDVVITLGAVIRGDTPHFDVVVSEASKGIATVSRETGVPIIFGVLTTDTMQQALERAGIKNNLGWSYALQALEMGSLMKAVN.

5-amino-6-(D-ribitylamino)uracil is bound by residues phenylalanine 23, 61–63 (SFE), and 85–87 (AVI). Residue 90 to 91 (DT) participates in (2S)-2-hydroxy-3-oxobutyl phosphate binding. Residue histidine 93 is the Proton donor of the active site. Phenylalanine 118 serves as a coordination point for 5-amino-6-(D-ribitylamino)uracil. Arginine 132 provides a ligand contact to (2S)-2-hydroxy-3-oxobutyl phosphate.

The protein belongs to the DMRL synthase family.

The enzyme catalyses (2S)-2-hydroxy-3-oxobutyl phosphate + 5-amino-6-(D-ribitylamino)uracil = 6,7-dimethyl-8-(1-D-ribityl)lumazine + phosphate + 2 H2O + H(+). It functions in the pathway cofactor biosynthesis; riboflavin biosynthesis; riboflavin from 2-hydroxy-3-oxobutyl phosphate and 5-amino-6-(D-ribitylamino)uracil: step 1/2. Functionally, catalyzes the formation of 6,7-dimethyl-8-ribityllumazine by condensation of 5-amino-6-(D-ribitylamino)uracil with 3,4-dihydroxy-2-butanone 4-phosphate. This is the penultimate step in the biosynthesis of riboflavin. This Prochlorococcus marinus (strain NATL2A) protein is 6,7-dimethyl-8-ribityllumazine synthase.